A 93-amino-acid chain; its full sequence is Small ribosomal subunit protein uS15c (93 aa).

This sequence belongs to the universal ribosomal protein uS15 family. Part of the 30S ribosomal subunit.

Its subcellular location is the plastid. It localises to the chloroplast. The sequence is that of Small ribosomal subunit protein uS15c (rps15) from Jasminum nudiflorum (Winter jasmine).